We begin with the raw amino-acid sequence, 459 residues long: Asparagine--tRNA ligase (459 aa).

It belongs to the class-II aminoacyl-tRNA synthetase family. As to quaternary structure, homodimer.

It is found in the cytoplasm. The catalysed reaction is tRNA(Asn) + L-asparagine + ATP = L-asparaginyl-tRNA(Asn) + AMP + diphosphate + H(+). The polypeptide is Asparagine--tRNA ligase (Pelobacter propionicus (strain DSM 2379 / NBRC 103807 / OttBd1)).